The following is a 348-amino-acid chain: L-asparaginase 2 (348 aa).

A signal peptide spans 1 to 22; the sequence is MEFFKKTALAALVMGFSGAALA. The Asparaginase/glutaminase domain maps to 24 to 348; sequence PNITILATGG…QQIQQIFNQY (325 aa). Thr-34 (O-isoaspartyl threonine intermediate) is an active-site residue. Substrate-binding positions include 80–81 and 111–112; these read SQ and TD. The cysteines at positions 99 and 127 are disulfide-linked.

This sequence belongs to the asparaginase 1 family. In terms of assembly, homotetramer.

Its subcellular location is the periplasm. The enzyme catalyses L-asparagine + H2O = L-aspartate + NH4(+). The chain is L-asparaginase 2 (ansB) from Escherichia coli (strain K12).